The following is a 144-amino-acid chain: Ribosomally synthesized cyclic peptide phomopsin precursor phomA' (144 aa).

Positions 1–18 (MRFTPAIVIAAFCSLAVA) are cleaved as a signal peptide. 9 consecutive propeptides follow at residues 19–35 (APAA…AVED), 42–50 (KKRGEAVED), 57–65 (KKRGEAVED), 72–79 (KRGEAVED), 86–94 (KKRGEAVED), 101–108 (KRGEAVED), 115–123 (KKRGEAVED), 130–137 (KRGEAVED), and Lys144.

PhomA' is processed by several endopeptidases including kexin proteases as well as the cluster-specific S41 family peptidase phomP1' and the peptidase phomG' to produce 5 identical copies of the hexapeptide Tyr-Val-Ile-Pro-Ile-Asp and 3 identical copies of Tyr-Val-Ile-Pro-Phe-Asp, that are further modified into phomapsins A and P, respectively. The timing and order of proteolysis of the phomA' precursor and PTMs are still unknown. Two tyrosinase-like enzyme phomQ1' and PhomQ2, catalyze the chlorination and hydroxylation of Tyr, respectively. PhomYb', is proposed to be involved in the construction of the macrocyclic structure. The other four ustYa family proteins may be involved in PTMs that generate the unique structure of phomopsin A. PhomYa' is required for the hydroxylation of C-beta of Tyr. PhomYc', PhomYd', and PhomYe' are responsible for the biosynthesis of 2,3-dehydroisoleucine (dIle), 2,3-dehydroaspartic acid (dAsp), and 3,4-dehydroproline (dPro), respectively. While dIle formation by phomYc is indispensable for the installation of dAsp by phomYd, the order of the other PTMs have not been elucidated yet. Most of the biosynthetic enzymes likely have broad substrate specificity, and thus, there might be a metabolic grid from a precursor to phomopsin A. The enzyme(s) responsible for the biosynthesis of 3,4-dehydrovaline (dVal) have also not been identified yet. Finally, PhomM' acts as an S-adenosylmethionine-dependent alpha-N-methyltransferase that catalyzes two successive N-methylation reactions, converting N-desmethyl-phomopsin A to phomopsin A and phomopsin A further to an N,N-dimethylated congener called phomopsin E.

It functions in the pathway mycotoxin biosynthesis. Functionally, ribosomally synthesized cyclic peptide phomopsin precursor; part of the gene cluster that mediates the biosynthesis of the phomopsins, a group of hexapeptide mycotoxins which infects lupins and causes lupinosis disease in livestock. The phomA' translated product contains a 5-fold repeated peptide embedding the hexapeptide Tyr-Val-Ile-Pro-Ile-Asp and a 3-fold repeated peptide embedding the hexapeptide Tyr-Val-Ile-Pro-Phe-Asp, that is converted into phomapsin A and phomapsin P, respectively. After being excised from the precursor peptide by kexin proteases, the core peptides are cyclized and modified post-translationally by enzymes encoded within the corresponding gene cluster. The polypeptide is Ribosomally synthesized cyclic peptide phomopsin precursor phomA' (Diaporthe leptostromiformis (Lupinosis disease fungus)).